The primary structure comprises 383 residues: Chaperone protein DnaJ (383 aa).

Positions D5–G70 constitute a J domain. Residues G139–E217 form a CR-type zinc finger. Zn(2+) is bound by residues C152, C155, C169, C172, C191, C194, C205, and C208. CXXCXGXG motif repeat units lie at residues C152–G159, C169–G176, C191–G198, and C205–G212.

This sequence belongs to the DnaJ family. In terms of assembly, homodimer. Zn(2+) serves as cofactor.

It is found in the cytoplasm. In terms of biological role, participates actively in the response to hyperosmotic and heat shock by preventing the aggregation of stress-denatured proteins and by disaggregating proteins, also in an autonomous, DnaK-independent fashion. Unfolded proteins bind initially to DnaJ; upon interaction with the DnaJ-bound protein, DnaK hydrolyzes its bound ATP, resulting in the formation of a stable complex. GrpE releases ADP from DnaK; ATP binding to DnaK triggers the release of the substrate protein, thus completing the reaction cycle. Several rounds of ATP-dependent interactions between DnaJ, DnaK and GrpE are required for fully efficient folding. Also involved, together with DnaK and GrpE, in the DNA replication of plasmids through activation of initiation proteins. This is Chaperone protein DnaJ from Methylorubrum populi (strain ATCC BAA-705 / NCIMB 13946 / BJ001) (Methylobacterium populi).